Reading from the N-terminus, the 227-residue chain is Cytochrome c oxidase subunit 2 (227 aa).

The Mitochondrial intermembrane segment spans residues 1 to 14 (MAYPFELGFQDATS). Residues 15–45 (PIMEELLHFHDHTLMIVFLISSLVLYIISLM) form a helical membrane-spanning segment. Over 46–59 (LTTKLTHTSTMDAQ) the chain is Mitochondrial matrix. Residues 60–87 (EVETIWTILPAIILILIALPSLRILYMM) traverse the membrane as a helical segment. Residues 88 to 227 (DEINDPSLTV…HFENWSSSML (140 aa)) are Mitochondrial intermembrane-facing. 6 residues coordinate Cu cation: His161, Cys196, Glu198, Cys200, His204, and Met207. Glu198 is a binding site for Mg(2+).

The protein belongs to the cytochrome c oxidase subunit 2 family. Component of the cytochrome c oxidase (complex IV, CIV), a multisubunit enzyme composed of 14 subunits. The complex is composed of a catalytic core of 3 subunits MT-CO1, MT-CO2 and MT-CO3, encoded in the mitochondrial DNA, and 11 supernumerary subunits COX4I, COX5A, COX5B, COX6A, COX6B, COX6C, COX7A, COX7B, COX7C, COX8 and NDUFA4, which are encoded in the nuclear genome. The complex exists as a monomer or a dimer and forms supercomplexes (SCs) in the inner mitochondrial membrane with NADH-ubiquinone oxidoreductase (complex I, CI) and ubiquinol-cytochrome c oxidoreductase (cytochrome b-c1 complex, complex III, CIII), resulting in different assemblies (supercomplex SCI(1)III(2)IV(1) and megacomplex MCI(2)III(2)IV(2)). Found in a complex with TMEM177, COA6, COX18, COX20, SCO1 and SCO2. Interacts with TMEM177 in a COX20-dependent manner. Interacts with COX20. Interacts with COX16. Cu cation is required as a cofactor.

It localises to the mitochondrion inner membrane. It catalyses the reaction 4 Fe(II)-[cytochrome c] + O2 + 8 H(+)(in) = 4 Fe(III)-[cytochrome c] + 2 H2O + 4 H(+)(out). In terms of biological role, component of the cytochrome c oxidase, the last enzyme in the mitochondrial electron transport chain which drives oxidative phosphorylation. The respiratory chain contains 3 multisubunit complexes succinate dehydrogenase (complex II, CII), ubiquinol-cytochrome c oxidoreductase (cytochrome b-c1 complex, complex III, CIII) and cytochrome c oxidase (complex IV, CIV), that cooperate to transfer electrons derived from NADH and succinate to molecular oxygen, creating an electrochemical gradient over the inner membrane that drives transmembrane transport and the ATP synthase. Cytochrome c oxidase is the component of the respiratory chain that catalyzes the reduction of oxygen to water. Electrons originating from reduced cytochrome c in the intermembrane space (IMS) are transferred via the dinuclear copper A center (CU(A)) of subunit 2 and heme A of subunit 1 to the active site in subunit 1, a binuclear center (BNC) formed by heme A3 and copper B (CU(B)). The BNC reduces molecular oxygen to 2 water molecules using 4 electrons from cytochrome c in the IMS and 4 protons from the mitochondrial matrix. The protein is Cytochrome c oxidase subunit 2 (MT-CO2) of Neotamias bulleri (Buller's chipmunk).